Reading from the N-terminus, the 155-residue chain is Pre-hexon-linking protein VIII (155 aa).

Positions 44 to 84 are excised as a propeptide; that stretch reads GVHRTKDIKPEDLVGRGIQLNSYQPPTTRLKPERVFQLAGG.

The protein belongs to the adenoviridae hexon-linking protein family. In terms of assembly, interacts with the peripentonal hexons as well as the hexons in the facets. Part of a complex composed of the core-capsid bridging protein, the endosome lysis protein VI and the hexon-linking protein VIII; these interactions bridge the virus core to the capsid. Cleaved by the viral protease during virion maturation. May cause the middle segment to be shed from the capsid.

The protein resides in the virion. It localises to the host nucleus. Functionally, structural component of the virion that acts as a cement protein on the capsid interior and which glue the peripentonal hexons and group-of-nine hexons together. In Bos taurus (Bovine), this protein is Pre-hexon-linking protein VIII.